Here is a 461-residue protein sequence, read N- to C-terminus: Asparagine--tRNA ligase (461 aa).

Belongs to the class-II aminoacyl-tRNA synthetase family. As to quaternary structure, homodimer.

It is found in the cytoplasm. The catalysed reaction is tRNA(Asn) + L-asparagine + ATP = L-asparaginyl-tRNA(Asn) + AMP + diphosphate + H(+). This is Asparagine--tRNA ligase from Nitratidesulfovibrio vulgaris (strain DP4) (Desulfovibrio vulgaris).